Consider the following 68-residue polypeptide: Stage III sporulation protein AC (68 aa).

The next 2 helical transmembrane spans lie at 5 to 25 and 33 to 53; these read VNVI…HTIL and YAQW…ATIV.

It is found in the cell membrane. This Bacillus subtilis (strain 168) protein is Stage III sporulation protein AC (spoIIIAC).